A 426-amino-acid chain; its full sequence is O-methyltransferase pyvH (426 aa).

Residues 258–259 (GG), D281, 308–309 (DF), and R323 each bind S-adenosyl-L-methionine. Residue H327 is the Proton acceptor of the active site.

Belongs to the class I-like SAM-binding methyltransferase superfamily. Cation-independent O-methyltransferase family.

Its pathway is secondary metabolite biosynthesis. In terms of biological role, O-methyltransferase; part of the gene cluster that mediates the biosynthesis of pyranoviolin A, a pyranonigrin analog with a C-3 methoxy group. Initially, the PKS portion of pyvA synthesizes C-10 carbon chain from 5 molecules of malonyl-CoA, which is then condensed with the thiolation (T) domain-bound glycine activated by the adenylation (A) domain. The subsequent chain release by Dieckmann condensation (DKC) could be catalyzed by the TE domain present at the C-terminus of pyvA and/or the alpha/beta hydrolase pyvD, installing the tetramic acid moiety. The FAD-dependent monooxygenase pyvC next epoxidizes one of the olefins of the polyketide part, and the epoxide ring-opening induces the dihydro-gamma-pyrone ring formation. The cytochrome P450 monooxygeanse pyvB would be responsible for the 2 consecutive reactions, in which the dihydro-gamma-pyrone is oxidized to gamma-pyrone and C-7 is hydroxylated to yield pyranonigrin F. Finally, the O-methyltransferase pyvH methylates the C-3 hydroxy group to complete the biosynthesis. This is O-methyltransferase pyvH from Aspergillus violaceofuscus (strain CBS 115571).